A 572-amino-acid polypeptide reads, in one-letter code: Dihydroxy-acid dehydratase (572 aa).

Cysteine 57 is a binding site for [2Fe-2S] cluster. Position 89 (aspartate 89) interacts with Mg(2+). Residue cysteine 130 coordinates [2Fe-2S] cluster. Aspartate 131 and lysine 132 together coordinate Mg(2+). The residue at position 132 (lysine 132) is an N6-carboxylysine. Cysteine 202 contacts [2Fe-2S] cluster. Glutamate 453 provides a ligand contact to Mg(2+). Serine 479 acts as the Proton acceptor in catalysis.

This sequence belongs to the IlvD/Edd family. Homodimer. It depends on [2Fe-2S] cluster as a cofactor. The cofactor is Mg(2+).

The enzyme catalyses (2R)-2,3-dihydroxy-3-methylbutanoate = 3-methyl-2-oxobutanoate + H2O. It catalyses the reaction (2R,3R)-2,3-dihydroxy-3-methylpentanoate = (S)-3-methyl-2-oxopentanoate + H2O. It participates in amino-acid biosynthesis; L-isoleucine biosynthesis; L-isoleucine from 2-oxobutanoate: step 3/4. It functions in the pathway amino-acid biosynthesis; L-valine biosynthesis; L-valine from pyruvate: step 3/4. Functionally, functions in the biosynthesis of branched-chain amino acids. Catalyzes the dehydration of (2R,3R)-2,3-dihydroxy-3-methylpentanoate (2,3-dihydroxy-3-methylvalerate) into 2-oxo-3-methylpentanoate (2-oxo-3-methylvalerate) and of (2R)-2,3-dihydroxy-3-methylbutanoate (2,3-dihydroxyisovalerate) into 2-oxo-3-methylbutanoate (2-oxoisovalerate), the penultimate precursor to L-isoleucine and L-valine, respectively. The sequence is that of Dihydroxy-acid dehydratase from Streptococcus thermophilus (strain CNRZ 1066).